The primary structure comprises 199 residues: Securin (199 aa).

Disordered regions lie at residues Met1–Gly23 and Arg58–Tyr108. An N-acetylalanine modification is found at Ala2. The segment covering Val7–Gly23 has biased composition (basic and acidic residues). Positions Arg58–Leu61 match the D-box motif. A TEK-box 1 motif is present at residues Thr68–Lys70. Positions Lys76 to Leu85 are enriched in polar residues. A TEK-box 2 motif is present at residues Thr91–Lys93. At Ser162 the chain carries Phosphoserine. Residues Pro179–Pro192 carry the SH3-binding motif.

It belongs to the securin family. In terms of assembly, interacts with the caspase-like ESPL1, and prevents its protease activity by covering its active site. Interacts with p53/TP53 and blocks its activity probably by blocking its binding to DNA. Interacts with the Ku 70 kDa subunit of ds-DNA kinase. Interacts with PTTG1IP. Interacts with RPS10 and DNAJA1. Phosphorylated at Ser-162 by CDK1 during mitosis. In terms of processing, phosphorylated in vitro by ds-DNA kinase. Post-translationally, ubiquitinated through 'Lys-11' linkage of ubiquitin moieties by the anaphase promoting complex (APC) at the onset of anaphase, conducting to its degradation. 'Lys-11'-linked ubiquitination is mediated by the E2 ligase UBE2C/UBCH10. In terms of tissue distribution, expressed at low level in most tissues, except in adult testis, where it is highly expressed. Expressed in both spermatocytes and spermatids.

It is found in the cytoplasm. Its subcellular location is the nucleus. Functionally, regulatory protein, which plays a central role in chromosome stability, in the p53/TP53 pathway, and DNA repair. Probably acts by blocking the action of key proteins. During the mitosis, it blocks Separase/ESPL1 function, preventing the proteolysis of the cohesin complex and the subsequent segregation of the chromosomes. At the onset of anaphase, it is ubiquitinated, conducting to its destruction and to the liberation of ESPL1. Its function is however not limited to a blocking activity, since it is required to activate ESPL1. Negatively regulates the transcriptional activity and related apoptosis activity of p53/TP53. The negative regulation of p53/TP53 may explain the strong transforming capability of the protein when it is overexpressed. May also play a role in DNA repair via its interaction with Ku, possibly by connecting DNA damage-response pathways with sister chromatid separation. This is Securin (Pttg1) from Rattus norvegicus (Rat).